The primary structure comprises 335 residues: Probable nicotianamine synthase 2 (335 aa).

It belongs to the nicotianamine synthase (NAS)-like family.

It catalyses the reaction 3 S-adenosyl-L-methionine = nicotianamine + 3 S-methyl-5'-thioadenosine + 3 H(+). In terms of biological role, synthesizes nicotianamine, a polyamine that is the first intermediate in the synthesis of the phytosiderophores of the mugineic acid type found in gramineae which serves as a sensor for the physiological iron status within the plant, and/or might be involved in the transport of iron. This is Probable nicotianamine synthase 2 (NAS2) from Hordeum vulgare (Barley).